The primary structure comprises 167 residues: Ribonuclease H (167 aa).

The 143-residue stretch at 1–143 (MYKQIEIFTD…CDQLARKAAK (143 aa)) folds into the RNase H type-1 domain. Asp-10, Glu-48, Asp-70, and Asp-135 together coordinate Mg(2+).

It belongs to the RNase H family. In terms of assembly, monomer. It depends on Mg(2+) as a cofactor.

Its subcellular location is the cytoplasm. The catalysed reaction is Endonucleolytic cleavage to 5'-phosphomonoester.. In terms of biological role, endonuclease that specifically degrades the RNA of RNA-DNA hybrids. This is Ribonuclease H from Blochmanniella floridana.